A 681-amino-acid chain; its full sequence is PWWP domain-containing DNA repair factor 3B (681 aa).

Positions 102–121 are enriched in polar residues; sequence NLSQESMSEEQPTATASENV. 3 disordered regions span residues 102 to 144, 166 to 200, and 285 to 304; these read NLSQ…TQED, HTTG…DDKK, and QNQS…AGCS. Ser128 bears the Phosphoserine mark. The segment covering 285 to 302 has biased composition (polar residues); that stretch reads QNQSSVESDVGAETSTAG. Residues 377–438 enclose the PWWP domain; it reads TGMIVWFKYQ…KKYDCKEKQA (62 aa).

This sequence belongs to the PWWP3A family.

This is PWWP domain-containing DNA repair factor 3B (Pwwp3b) from Mus musculus (Mouse).